The primary structure comprises 376 residues: Probable transcription factor At1g61730 (376 aa).

Residues 1–150 (MTKKLNPLED…RVKKDEESVK (150 aa)) are disordered. Positions 17–40 (SDEDDVETSEAGEASDDSSSSEED) are enriched in acidic residues. Ser-49 is subject to Phosphoserine. The segment covering 49–72 (SPSATTAAAPPAKSTAVSTAADSD) has biased composition (low complexity). The span at 73-83 (SGSETETDSDS) shows a compositional bias: acidic residues. A compositionally biased stretch (polar residues) spans 87 to 103 (NPPNSGSGKTIALNTVN).

Belongs to the GeBP family. In terms of assembly, interacts with DEK3.

This chain is Probable transcription factor At1g61730, found in Arabidopsis thaliana (Mouse-ear cress).